The primary structure comprises 142 residues: Transcriptional regulator MraZ (142 aa).

2 SpoVT-AbrB domains span residues 5–51 (ASAL…PRPE) and 77–120 (AADV…DAAT).

The protein belongs to the MraZ family. Forms oligomers.

The protein resides in the cytoplasm. It is found in the nucleoid. This chain is Transcriptional regulator MraZ, found in Cupriavidus taiwanensis (strain DSM 17343 / BCRC 17206 / CCUG 44338 / CIP 107171 / LMG 19424 / R1) (Ralstonia taiwanensis (strain LMG 19424)).